We begin with the raw amino-acid sequence, 385 residues long: MTKHARFFLLPSFILISAALIAGCNDKGEEKAHVGEPQVTVHIVKTAPLEVKTELPGRTNAYRIAEVRPQVSGIVLNRNFTEGSDVQAGQSLYQIDPATYQANYDSAKGELAKSEAAAAIAHLTVKRYVPLVGTKYISQQEYDQAIADARQADAAVIAAKATVESARINLAYTKVTAPISGRIGKSTVTEGALVTNGQTTELATVQQLDPIYVDVTQSSNDFMRLKQSVEQGNLHKENATSNVELVMENGQTYPLKGTLQFSDVTVDESTGSITLRAVFPNPQHTLLPGMFVRARIDEGVQPDAILIPQQGVSRTPRGDATVLIVNDKSQVEARPVVASQAIGDKWLISEGLKSGDQVIVSGLQKARPGEQVKATTDTPADTASK.

Residues 1 to 23 (MTKHARFFLLPSFILISAALIAG) form the signal peptide. Residue C24 is the site of N-palmitoyl cysteine attachment. C24 is lipidated: S-diacylglycerol cysteine. Residues 366 to 385 (ARPGEQVKATTDTPADTASK) are disordered. Positions 373 to 385 (KATTDTPADTASK) are enriched in polar residues.

This sequence belongs to the membrane fusion protein (MFP) (TC 8.A.1) family. Part of the tripartite efflux system AcrEF-TolC, which is composed of an inner membrane transporter, AcrF, a periplasmic membrane fusion protein, AcrE, and an outer membrane component, TolC. The complex forms a large protein conduit and can translocate molecules across both the inner and outer membranes.

Its subcellular location is the cell inner membrane. Part of the tripartite efflux system AcrEF-TolC. Involved in the efflux of indole and organic solvents. In Escherichia coli (strain K12), this protein is Multidrug export protein AcrE (acrE).